Reading from the N-terminus, the 101-residue chain is Protein S100-A7A (101 aa).

EF-hand domains follow at residues 13 to 48 (MIDMFHKYTGRDGKIEKPSLLTMMKENFPNFLSACD) and 50 to 85 (KGIHYLATVFEKKDKNEDKKIDFSEFLSLLGDIAAD). 3 residues coordinate Zn(2+): H18, E28, and E38. Ca(2+) contacts are provided by D63 and N65. A Zn(2+)-binding site is contributed by E66. Residues D67, K69, and E74 each contribute to the Ca(2+) site. Zn(2+) contacts are provided by H87 and H91.

The protein belongs to the S-100 family. In terms of tissue distribution, overexpressed in psoriasis.

The protein localises to the cytoplasm. Its function is as follows. May be involved in epidermal differentiation and inflammation and might therefore be important for the pathogenesis of psoriasis and other diseases. This Homo sapiens (Human) protein is Protein S100-A7A (S100A7A).